Consider the following 614-residue polypeptide: Dolichyl-diphosphooligosaccharide--protein glycosyltransferase subunit 1A (614 aa).

The N-terminal stretch at 1 to 25 (MKQSSVVDLLLLLLAIALLATPAFS) is a signal peptide. Residues 26-432 (DLVLSKVERR…QVYYKFSNIN (407 aa)) are Lumenal-facing. N94 and N299 each carry an N-linked (GlcNAc...) asparagine glycan. K311 is covalently cross-linked (Glycyl lysine isopeptide (Lys-Gly) (interchain with G-Cter in ubiquitin)). A glycan (N-linked (GlcNAc...) asparagine) is linked at N352. The chain crosses the membrane as a helical span at residues 433 to 453 (LLSEPLMLISGFFILFITCII). At 454–614 (YTRADISISK…EDLLEFIDEI (161 aa)) the chain is on the cytoplasmic side.

The protein belongs to the OST1 family. In terms of assembly, component of the oligosaccharyltransferase (OST) complex.

It localises to the endoplasmic reticulum membrane. It participates in protein modification; protein glycosylation. In terms of biological role, subunit of the oligosaccharyl transferase (OST) complex that catalyzes the initial transfer of a defined glycan (Glc(3)Man(9)GlcNAc(2) in eukaryotes) from the lipid carrier dolichol-pyrophosphate to an asparagine residue within an Asn-X-Ser/Thr consensus motif in nascent polypeptide chains, the first step in protein N-glycosylation. N-glycosylation occurs cotranslationally and the complex associates with the Sec61 complex at the channel-forming translocon complex that mediates protein translocation across the endoplasmic reticulum (ER). All subunits are required for a maximal enzyme activity. The chain is Dolichyl-diphosphooligosaccharide--protein glycosyltransferase subunit 1A (OST1A) from Arabidopsis thaliana (Mouse-ear cress).